The sequence spans 189 residues: Protein seele (189 aa).

An N-terminal signal peptide occupies residues 1–17; sequence MLTKALILFGLLALAQG. Residues 23 to 176 enclose the Saposin B-type domain; the sequence is REVKCHVCKA…EQASYCDESP (154 aa). Disulfide bonds link Cys-27–Cys-172, Cys-30–Cys-165, and Cys-85–Cys-136. The Prevents secretion from ER signature appears at 186–189; sequence KEEL.

It belongs to the canopy family.

The protein resides in the endoplasmic reticulum. Its function is as follows. Involved in embryonic dorsal-ventral patterning which is generated by a series of serine protease processing events where gd processes snk which cleaves ea which then processes spz into the activating ligand for the Toll receptor. Required during this process for the secretion of ea from the developing embryo into the perivitelline space and for ea processing. This is Protein seele from Drosophila melanogaster (Fruit fly).